Here is a 743-residue protein sequence, read N- to C-terminus: MSERQGGQEQRTEADGMTTEGISETSQTLQALANGLPADAFAVLGPKPLAEGRRQVRVLAPGAEAMGLIDPRGKLLARMQASAIDGVFEGILAADGPYRLRIVWPDRVQEVEDPYAFAATLDESLLLQIAAGDGQAVRRALGAQHVHCGDVPGVRFAVWAPHAQRVAVVGDFNGWDVRRHPMRQRIGGFWELFLPRVEAGARYKYAVTAADGRVLLKADPVARQTELPPATASVVPSAAAFAWTDAAWMANRDPGAVPAPLSIYEVHAASWRRDGHNQPLDWPTLAEQLIPYVQQLGFTHIELLPITEHPFGGSWGYQPLGLYAPTARHGSPDGFAQFVDACHRAGIGVILDWVSAHFPDDAHGLAQFDGAALYEHADPREGMHRDWNTLIYNYGRPEVTAYLLGSALEWIEHYHLDGLRVDAVASMLYRDYGRAEGEWVPNAHGGRENLEAVAFLRQLNREIATQFPGVLTIAEESTAWPGVTAAISDGGLGFTHKWNMGWMHDTLGYMQRDPAERAQHHSQLTFGLVYAFDERFVLPLSHDEVVHGTGGLLGQMPGDDWRRFANLRAYLALMWAHPGDKLLFMGAEFGQWADWNHDQSLDWHLLDGARHRGMQQLVGDLNAALRRTPALYRGSHRADGFDWSVADDARNSVLAFVRHDPAGGAPLLAVSNLTPQPHHDYHVGVPRAGLWREILNTDSAHYGGSNLGNSGRLATEPVGMHGHAQRLRLTLPPLATIYLQAEK.

A disordered region spans residues 1–23; it reads MSERQGGQEQRTEADGMTTEGIS. Asp-422 acts as the Nucleophile in catalysis. Residue Glu-475 is the Proton donor of the active site.

It belongs to the glycosyl hydrolase 13 family. GlgB subfamily. In terms of assembly, monomer.

The enzyme catalyses Transfers a segment of a (1-&gt;4)-alpha-D-glucan chain to a primary hydroxy group in a similar glucan chain.. The protein operates within glycan biosynthesis; glycogen biosynthesis. Functionally, catalyzes the formation of the alpha-1,6-glucosidic linkages in glycogen by scission of a 1,4-alpha-linked oligosaccharide from growing alpha-1,4-glucan chains and the subsequent attachment of the oligosaccharide to the alpha-1,6 position. The chain is 1,4-alpha-glucan branching enzyme GlgB 2 from Xanthomonas euvesicatoria pv. vesicatoria (strain 85-10) (Xanthomonas campestris pv. vesicatoria).